Reading from the N-terminus, the 486-residue chain is Dipeptide and tripeptide permease B (486 aa).

The Cytoplasmic portion of the chain corresponds to 1–27 (MNKPVSIGLLQQPKPFFMIFFVELWER). The helical transmembrane segment at 28–48 (FGYYGVQGVLTVYFVQKLGFS) threads the bilayer. Over 49-52 (QEQA) the chain is Periplasmic. A helical transmembrane segment spans residues 53-73 (FITFGAFAALVFGLISIGGYV). At 74 to 82 (GDHLLGTKR) the chain is on the cytoplasmic side. Residues 83 to 103 (TIVLGAIVLAIGYFMTGLSIL) traverse the membrane as a helical segment. At 104 to 106 (HPN) the chain is on the periplasmic side. Residues 107–127 (LIFYALGTIAVGNGLFKANPA) form a helical membrane-spanning segment. The Cytoplasmic portion of the chain corresponds to 128–146 (SLLSKCYPPKDPRLDGAFT). The helical transmembrane segment at 147 to 167 (LFYMSINLGSLFSLALAPVIA) threads the bilayer. Residues 168–172 (EKFSY) are Periplasmic-facing. Residues 173 to 193 (AVTYNICGIGLIIALLVYIFC) form a helical membrane-spanning segment. At 194–211 (RNTVRNIGSEPDHQRINY) the chain is on the cytoplasmic side. The helical transmembrane segment at 212–232 (TNLFLVVAGSVVMVYVCAWLM) threads the bilayer. Residue His-233 is a topological domain, periplasmic. The chain crosses the membrane as a helical span at residues 234 to 254 (NVKIANIMLITLSVIVVFIFF). Over 255-267 (REALKQDKIGRNK) the chain is Cytoplasmic. A helical membrane pass occupies residues 268 to 288 (MFVAFILMLQAIVFFILYAQM). The Periplasmic segment spans residues 289 to 311 (PTSLNFFAIHNVHHQLLGFNINP). Residues 312 to 332 (VSFQALNPFWIVVASPILAVL) traverse the membrane as a helical segment. Residues 333–348 (YTHWGAKGKDLTMPAK) are Cytoplasmic-facing. The chain crosses the membrane as a helical span at residues 349-369 (FAVGMFLCSLGFLTAAAAGLW). The Periplasmic portion of the chain corresponds to 370 to 375 (FADEQG). A helical membrane pass occupies residues 376-396 (LTSAWFIVLVYLFQGVGELMI). Residues 397–419 (SALGLAMIAALVPQYLMGFILGM) lie on the Cytoplasmic side of the membrane. A helical membrane pass occupies residues 420–440 (WYLTQATSSLLGGYVAALTAA). The Periplasmic segment spans residues 441–456 (PKGITDPLQTLPVYTS). Residues 457-477 (VFGKIGIATFIVAIIMAATVP) form a helical membrane-spanning segment. The Cytoplasmic portion of the chain corresponds to 478–486 (LLNRMMQEK).

This sequence belongs to the major facilitator superfamily. Proton-dependent oligopeptide transporter (POT/PTR) (TC 2.A.17) family. DtpB subfamily.

The protein localises to the cell inner membrane. In terms of biological role, proton-dependent permease that transports di- and tripeptides. This Photorhabdus luminescens (Xenorhabdus luminescens) protein is Dipeptide and tripeptide permease B.